A 55-amino-acid chain; its full sequence is Large ribosomal subunit protein bL33m (55 aa).

This sequence belongs to the bacterial ribosomal protein bL33 family. As to quaternary structure, component of the mitochondrial large ribosomal subunit (mt-LSU). Mature yeast 74S mitochondrial ribosomes consist of a small (37S) and a large (54S) subunit. The 37S small subunit contains a 15S ribosomal RNA (15S mt-rRNA) and at least 32 different proteins. The 54S large subunit contains a 21S rRNA (21S mt-rRNA) and at least 45 different proteins. bL33m stabilizes the tRNA acceptor stem in the E-site.

It localises to the mitochondrion. Component of the mitochondrial ribosome (mitoribosome), a dedicated translation machinery responsible for the synthesis of mitochondrial genome-encoded proteins, including at least some of the essential transmembrane subunits of the mitochondrial respiratory chain. The mitoribosomes are attached to the mitochondrial inner membrane and translation products are cotranslationally integrated into the membrane. The protein is Large ribosomal subunit protein bL33m (mrpl39) of Schizosaccharomyces pombe (strain 972 / ATCC 24843) (Fission yeast).